The primary structure comprises 547 residues: Phosphomethylpyrimidine synthase (547 aa).

Residues asparagine 146, methionine 175, tyrosine 204, histidine 240, 260 to 262, 301 to 304, and glutamate 340 each bind substrate; these read SRG and DGLR. Histidine 344 lines the Zn(2+) pocket. Tyrosine 367 contributes to the substrate binding site. Position 408 (histidine 408) interacts with Zn(2+). [4Fe-4S] cluster-binding residues include cysteine 488, cysteine 491, and cysteine 496.

The protein belongs to the ThiC family. Requires [4Fe-4S] cluster as cofactor.

It catalyses the reaction 5-amino-1-(5-phospho-beta-D-ribosyl)imidazole + S-adenosyl-L-methionine = 4-amino-2-methyl-5-(phosphooxymethyl)pyrimidine + CO + 5'-deoxyadenosine + formate + L-methionine + 3 H(+). It participates in cofactor biosynthesis; thiamine diphosphate biosynthesis. Functionally, catalyzes the synthesis of the hydroxymethylpyrimidine phosphate (HMP-P) moiety of thiamine from aminoimidazole ribotide (AIR) in a radical S-adenosyl-L-methionine (SAM)-dependent reaction. The protein is Phosphomethylpyrimidine synthase of Mycobacterium bovis (strain ATCC BAA-935 / AF2122/97).